A 216-amino-acid polypeptide reads, in one-letter code: MNLILMGLPGAGKGTQAEQIVAKYNIPHISTGDMFRAAMKAETELGLQAKSFIDKGALVPDEVTIGIVRERLSQEDCKKGFLLDGFPRTVAQASALEEIMKDLGKKIDYVLNINVDSGLLLKRLTGRRICKECGATYHLEFNPPAKADVCDKCGGELYQRSDDNEETVANRLEVNIKQTKPLLDFYEELGYLQSINGEQDINKVFADIDVLIGGLA.

10–15 (GAGKGT) lines the ATP pocket. Residues 30–59 (STGDMFRAAMKAETELGLQAKSFIDKGALV) are NMP. Residues threonine 31, arginine 36, 57–59 (ALV), 85–88 (GFPR), and glutamine 92 each bind AMP. The segment at 126 to 163 (GRRICKECGATYHLEFNPPAKADVCDKCGGELYQRSDD) is LID. Arginine 127 is a binding site for ATP. The Zn(2+) site is built by cysteine 130 and cysteine 133. 136 to 137 (TY) provides a ligand contact to ATP. 2 residues coordinate Zn(2+): cysteine 150 and cysteine 153. AMP contacts are provided by arginine 160 and arginine 171. An ATP-binding site is contributed by glutamine 199.

It belongs to the adenylate kinase family. Monomer.

Its subcellular location is the cytoplasm. It catalyses the reaction AMP + ATP = 2 ADP. It functions in the pathway purine metabolism; AMP biosynthesis via salvage pathway; AMP from ADP: step 1/1. Its function is as follows. Catalyzes the reversible transfer of the terminal phosphate group between ATP and AMP. Plays an important role in cellular energy homeostasis and in adenine nucleotide metabolism. The chain is Adenylate kinase from Bacillus cytotoxicus (strain DSM 22905 / CIP 110041 / 391-98 / NVH 391-98).